The primary structure comprises 417 residues: Serine hydroxymethyltransferase (417 aa).

Residues L121 and 125–127 (GHL) contribute to the (6S)-5,6,7,8-tetrahydrofolate site. K229 is subject to N6-(pyridoxal phosphate)lysine. Position 355–357 (355–357 (SPF)) interacts with (6S)-5,6,7,8-tetrahydrofolate.

This sequence belongs to the SHMT family. As to quaternary structure, homodimer. Pyridoxal 5'-phosphate is required as a cofactor.

It is found in the cytoplasm. It carries out the reaction (6R)-5,10-methylene-5,6,7,8-tetrahydrofolate + glycine + H2O = (6S)-5,6,7,8-tetrahydrofolate + L-serine. Its pathway is one-carbon metabolism; tetrahydrofolate interconversion. It participates in amino-acid biosynthesis; glycine biosynthesis; glycine from L-serine: step 1/1. Functionally, catalyzes the reversible interconversion of serine and glycine with tetrahydrofolate (THF) serving as the one-carbon carrier. This reaction serves as the major source of one-carbon groups required for the biosynthesis of purines, thymidylate, methionine, and other important biomolecules. Also exhibits THF-independent aldolase activity toward beta-hydroxyamino acids, producing glycine and aldehydes, via a retro-aldol mechanism. The polypeptide is Serine hydroxymethyltransferase (Xanthomonas axonopodis pv. citri (strain 306)).